Consider the following 284-residue polypeptide: Nucleotide-binding protein Pput_0988 (284 aa).

8-15 contacts ATP; the sequence is GRSGSGKS. 60-63 is a binding site for GTP; it reads DARN.

It belongs to the RapZ-like family.

In terms of biological role, displays ATPase and GTPase activities. The chain is Nucleotide-binding protein Pput_0988 from Pseudomonas putida (strain ATCC 700007 / DSM 6899 / JCM 31910 / BCRC 17059 / LMG 24140 / F1).